The primary structure comprises 800 residues: MLISNEWLKDYVNVDQSVQALAERITRTGIEVDDIIDYTKDIKKLVVGHVLSKTPHPNADKLNICQVDLGEEEPVQIVCGAPNVDEGQHVIVAKVGGRLPGGIKIKRAKLRGERSEGMICSLQEIGISSHVTPKNYESGIYVFPEAVKPGTDALEAIYLNDQVMEFDLTPNRADALSMVGTAYEVAALYQTKMNKPQLTSNESQESAKDELTIEVKNEDKVPYYSTRVVHDVTIGPSPVWMQFRLIKAGIRPINNVVDISNYVLLEYGQPLHMFDQEQIGSQSIEVRQAKKDETMRTLDGEERRLLDTDIVITNGKDPIALGGVMGGDFSEVTEQTRHVVVEGAIFDPVSIRHTSRRLNLRSESSSRFEKGIATEFVDEAVDRACYLLERYASGTVLKDRVSHGDLGSFVTPIEITADKVNRTIGFNLTDEEIIDIFEQLGFDTENKNGEITVNVPSRRKDISIKEDLIEEVARIYGYDEIPSTLPVFKDVTSGELTDRQFKTRTVKETLEGAGLDQAITYSLVSKNHATDFALQNRPTIELLMPMSEAHSTLRQSLLPHLIDAVSYNVARKNTNVKLYEIGRVFFGNGEGELPDEVEYLSGILTGDFVNNTWQGKKESVDFYLTKGVVERIAEKLNLQFDFRAGQIDGLHPGRTAIVSLNGKDIGFIGELHPTLAANNDLKRTYVFELNYDAMMEVSVGYINYEPIPRFPGVTRDIALEVNHEVTSSELLSIIHENGEDILNDTLVFDVYEGEHLEKGKKSIAIRLSYLDTENTLTDERVNAVHDKILEALKKHGAIIR.

In terms of domain architecture, tRNA-binding spans 39–154 (TKDIKKLVVG…EAVKPGTDAL (116 aa)). The B5 domain occupies 408–483 (SFVTPIEITA…RIYGYDEIPS (76 aa)). Mg(2+) is bound by residues aspartate 461, aspartate 467, glutamate 470, and glutamate 471. The 93-residue stretch at 708 to 800 (PRFPGVTRDI…ALKKHGAIIR (93 aa)) folds into the FDX-ACB domain.

This sequence belongs to the phenylalanyl-tRNA synthetase beta subunit family. Type 1 subfamily. Tetramer of two alpha and two beta subunits. It depends on Mg(2+) as a cofactor.

It is found in the cytoplasm. It catalyses the reaction tRNA(Phe) + L-phenylalanine + ATP = L-phenylalanyl-tRNA(Phe) + AMP + diphosphate + H(+). The protein is Phenylalanine--tRNA ligase beta subunit of Staphylococcus epidermidis (strain ATCC 12228 / FDA PCI 1200).